The sequence spans 285 residues: 4-hydroxybenzoate octaprenyltransferase (285 aa).

Helical transmembrane passes span 17 to 37 (PVGIFLLLWPTLWALWIAGAG), 41 to 61 (PKVLLVFVAGVALMRSAGCVI), 92 to 112 (LLLFAGLCLVAFGLVLLLNPL), 135 to 155 (HWPQAYLGAAFGWAVPMAFAA), 158 to 178 (GTVPIAAWLLFIATVLWATVY), 216 to 236 (ALLLLLFWIGYREGLGFYYYL), and 263 to 283 (AFLNNNAFGAVIFGGIALHYL).

The protein belongs to the UbiA prenyltransferase family. Mg(2+) serves as cofactor.

It localises to the cell inner membrane. The catalysed reaction is all-trans-octaprenyl diphosphate + 4-hydroxybenzoate = 4-hydroxy-3-(all-trans-octaprenyl)benzoate + diphosphate. Its pathway is cofactor biosynthesis; ubiquinone biosynthesis. In terms of biological role, catalyzes the prenylation of para-hydroxybenzoate (PHB) with an all-trans polyprenyl group. Mediates the second step in the final reaction sequence of ubiquinone-8 (UQ-8) biosynthesis, which is the condensation of the polyisoprenoid side chain with PHB, generating the first membrane-bound Q intermediate 3-octaprenyl-4-hydroxybenzoate. The protein is 4-hydroxybenzoate octaprenyltransferase of Nitrosococcus oceani (strain ATCC 19707 / BCRC 17464 / JCM 30415 / NCIMB 11848 / C-107).